The chain runs to 554 residues: Glutamine--tRNA ligase (554 aa).

The short motif at 34–44 is the 'HIGH' region element; sequence PEPNGYLHIGH. ATP contacts are provided by residues 35–37 and 41–47; these read EPN and HIGHAKS. 2 residues coordinate L-glutamine: Asp-67 and Tyr-212. ATP-binding positions include Thr-231, 261–262, and 269–271; these read RL and MSK. A 'KMSKS' region motif is present at residues 268–272; the sequence is VMSKR.

This sequence belongs to the class-I aminoacyl-tRNA synthetase family. Monomer.

The protein resides in the cytoplasm. The enzyme catalyses tRNA(Gln) + L-glutamine + ATP = L-glutaminyl-tRNA(Gln) + AMP + diphosphate. The protein is Glutamine--tRNA ligase of Shigella boydii serotype 4 (strain Sb227).